The following is a 480-amino-acid chain: Docking protein 1 (480 aa).

N-acetylmethionine is present on M1. In terms of domain architecture, PH spans 3-119; the sequence is GALMEGPLFL…WVQILCRTAF (117 aa). Phosphoserine is present on S48. An IRS-type PTB domain is found at 151–259; the sequence is EGSQFWVTSQ…QQQKAQGKVG (109 aa). Low complexity predominate over residues 253–262; it reads KAQGKVGQGQ. Positions 253–328 are disordered; sequence KAQGKVGQGQ…GSTPAGAGEG (76 aa). Basic and acidic residues predominate over residues 265 to 276; that stretch reads TRTDSHDGETEG. Residues S269 and S290 each carry the phosphoserine modification. 3 positions are modified to phosphotyrosine: Y295, Y336, and Y340. At Y361 the chain carries Phosphotyrosine; by INSR. At Y376 the chain carries Phosphotyrosine. The residue at position 397 (Y397) is a Phosphotyrosine; by INSR. Positions 398–480 are disordered; it reads ELPYNPATDD…RVGVKSEGST (83 aa). The residue at position 408 (Y408) is a Phosphotyrosine. The segment covering 410–423 has biased composition (pro residues); sequence VPPPRSSKPTPAPK. At S415 the chain carries Phosphoserine. A compositionally biased stretch (low complexity) spans 432–445; sequence SGTTAGSGSKGSDT. Over residues 446–455 the composition is skewed to polar residues; that stretch reads ALYSQVQKSG. Y448 is modified (phosphotyrosine).

It belongs to the DOK family. Type A subfamily. In terms of assembly, interacts with RasGAP and INPP5D/SHIP1. Interacts directly with phosphorylated ITGB3. Interacts with SRMS (via the SH2 and SH3 domains). Constitutively tyrosine-phosphorylated. Phosphorylated by TEC. Phosphorylated by LYN. Phosphorylated on tyrosine residues by the insulin receptor kinase. Results in the negative regulation of the insulin signaling pathway. Phosphorylated on tyrosine residues by SRMS.

It localises to the cytoplasm. The protein localises to the nucleus. DOK proteins are enzymatically inert adaptor or scaffolding proteins. They provide a docking platform for the assembly of multimolecular signaling complexes. DOK1 appears to be a negative regulator of the insulin signaling pathway. Modulates integrin activation by competing with talin for the same binding site on ITGB3. This Rattus norvegicus (Rat) protein is Docking protein 1 (Dok1).